Consider the following 672-residue polypeptide: UvrABC system protein B (672 aa).

The region spanning 26 to 181 (AGLEDGLAYQ…ILQRLAELQY (156 aa)) is the Helicase ATP-binding domain. 39–46 (GVTGSGKT) serves as a coordination point for ATP. Positions 92 to 115 (YYDYYQPEAYVPSSDTYIEKDASI) match the Beta-hairpin motif. Residues 430 to 592 (QVDDLLSEIK…ITPKSIQKAV (163 aa)) form the Helicase C-terminal domain. Residues 631–666 (AKELRKLEEQMYHHARNLEFEEAAAVRDKIQHIRKG) form the UVR domain.

The protein belongs to the UvrB family. Forms a heterotetramer with UvrA during the search for lesions. Interacts with UvrC in an incision complex.

Its subcellular location is the cytoplasm. Functionally, the UvrABC repair system catalyzes the recognition and processing of DNA lesions. A damage recognition complex composed of 2 UvrA and 2 UvrB subunits scans DNA for abnormalities. Upon binding of the UvrA(2)B(2) complex to a putative damaged site, the DNA wraps around one UvrB monomer. DNA wrap is dependent on ATP binding by UvrB and probably causes local melting of the DNA helix, facilitating insertion of UvrB beta-hairpin between the DNA strands. Then UvrB probes one DNA strand for the presence of a lesion. If a lesion is found the UvrA subunits dissociate and the UvrB-DNA preincision complex is formed. This complex is subsequently bound by UvrC and the second UvrB is released. If no lesion is found, the DNA wraps around the other UvrB subunit that will check the other stand for damage. The polypeptide is UvrABC system protein B (Coxiella burnetii (strain Dugway 5J108-111)).